Reading from the N-terminus, the 94-residue chain is Neutrophil antibiotic peptide NP-2 (94 aa).

A signal peptide spans 1-19 (MRTLTLLTALLLLALHTQA). The propeptide occupies 20-62 (KSPQGTAEEAPDQEQLVMEDQDISISFGGDKGTALQDADVKAG). Cystine bridges form between Cys65/Cys93, Cys67/Cys82, and Cys72/Cys92.

Belongs to the alpha-defensin family. In terms of tissue distribution, highest expression in bone marrow and to a much lesser extent in small intestine.

It is found in the secreted. Active in vitro against S.aureus, fungi, Gram-positive and Gram-negative bacteria and to a lesser extent against an enveloped virus. The protein is Neutrophil antibiotic peptide NP-2 (Defa) of Rattus norvegicus (Rat).